We begin with the raw amino-acid sequence, 321 residues long: L-lactate dehydrogenase (321 aa).

NAD(+)-binding positions include Val19, Asp40, Lys45, Tyr71, and 85–86; that span reads GA. Residues Gln88, Arg94, and 126–129 each bind substrate; that span reads NPVD. NAD(+) is bound by residues 124-126 and Ser149; that span reads ATN. Substrate is bound at residue 154–157; sequence DTAR. 2 residues coordinate beta-D-fructose 1,6-bisphosphate: Arg159 and His174. Catalysis depends on His181, which acts as the Proton acceptor. Tyr226 bears the Phosphotyrosine mark. Residue Thr235 participates in substrate binding.

This sequence belongs to the LDH/MDH superfamily. LDH family. As to quaternary structure, homotetramer.

Its subcellular location is the cytoplasm. It catalyses the reaction (S)-lactate + NAD(+) = pyruvate + NADH + H(+). The protein operates within fermentation; pyruvate fermentation to lactate; (S)-lactate from pyruvate: step 1/1. With respect to regulation, allosterically activated by fructose 1,6-bisphosphate (FBP). Its function is as follows. Catalyzes the conversion of lactate to pyruvate. The chain is L-lactate dehydrogenase from Oceanobacillus iheyensis (strain DSM 14371 / CIP 107618 / JCM 11309 / KCTC 3954 / HTE831).